The primary structure comprises 363 residues: Chorismate synthase (363 aa).

Arg47 contributes to the NADP(+) binding site. Residues 124–126 (RSS), Gly285, 300–304 (KPTAT), and Arg326 contribute to the FMN site.

This sequence belongs to the chorismate synthase family. Homotetramer. Requires FMNH2 as cofactor.

The enzyme catalyses 5-O-(1-carboxyvinyl)-3-phosphoshikimate = chorismate + phosphate. Its pathway is metabolic intermediate biosynthesis; chorismate biosynthesis; chorismate from D-erythrose 4-phosphate and phosphoenolpyruvate: step 7/7. Catalyzes the anti-1,4-elimination of the C-3 phosphate and the C-6 proR hydrogen from 5-enolpyruvylshikimate-3-phosphate (EPSP) to yield chorismate, which is the branch point compound that serves as the starting substrate for the three terminal pathways of aromatic amino acid biosynthesis. This reaction introduces a second double bond into the aromatic ring system. This Opitutus terrae (strain DSM 11246 / JCM 15787 / PB90-1) protein is Chorismate synthase.